The chain runs to 483 residues: Regulatory protein ViaA (483 aa).

It belongs to the ViaA family. Homodimer. Interacts with RavA.

Its subcellular location is the cytoplasm. In terms of biological role, component of the RavA-ViaA chaperone complex, which may act on the membrane to optimize the function of some of the respiratory chains. ViaA stimulates the ATPase activity of RavA. The sequence is that of Regulatory protein ViaA from Salmonella typhi.